Consider the following 515-residue polypeptide: Fatty acyl-CoA reductase 1 (515 aa).

At 1–465 (MVSIPEYYEG…ARKHLNKLRN (465 aa)) the chain is on the cytoplasmic side. The segment at 451–507 (SGLPAARKHLNKLRNIRYGFNTILVILIWRIFIARSQMARNIWYFVVSLCYKFLSYF) is necessary and sufficient for PEX19-mediated localization into peroxisome membrane. The helical transmembrane segment at 466 to 483 (IRYGFNTILVILIWRIFI) threads the bilayer. Residues 484–515 (ARSQMARNIWYFVVSLCYKFLSYFRASSTMRY) lie on the Peroxisomal side of the membrane.

This sequence belongs to the fatty acyl-CoA reductase family. Interacts with PEX19; PEX19 mediates the targeting of FAR1 to peroxisomes.

It is found in the peroxisome membrane. It catalyses the reaction a long-chain fatty acyl-CoA + 2 NADPH + 2 H(+) = a long-chain primary fatty alcohol + 2 NADP(+) + CoA. The enzyme catalyses hexadecanoyl-CoA + 2 NADPH + 2 H(+) = hexadecan-1-ol + 2 NADP(+) + CoA. The catalysed reaction is octadecanoyl-CoA + 2 NADPH + 2 H(+) = octadecan-1-ol + 2 NADP(+) + CoA. It carries out the reaction (9Z)-octadecenoyl-CoA + 2 NADPH + 2 H(+) = (9Z)-octadecen-1-ol + 2 NADP(+) + CoA. It catalyses the reaction (9Z,12Z)-octadecadienoyl-CoA + 2 NADPH + 2 H(+) = (9Z,12Z)-octadecadien-1-ol + 2 NADP(+) + CoA. The enzyme catalyses eicosanoyl-CoA + 2 NADPH + 2 H(+) = eicosan-1-ol + 2 NADP(+) + CoA. The catalysed reaction is 16-methylheptadecanoyl-CoA + 2 NADPH + 2 H(+) = 16-methylheptadecan-1-ol + 2 NADP(+) + CoA. It carries out the reaction 18-methylnonadecanoyl-CoA + 2 NADPH + 2 H(+) = 18-methylnonadecan-1-ol + 2 NADP(+) + CoA. Functionally, catalyzes the reduction of saturated and unsaturated C16 or C18 fatty acyl-CoA to fatty alcohols. It plays an essential role in the production of ether lipids/plasmalogens which synthesis requires fatty alcohols. In parallel, it is also required for wax monoesters production since fatty alcohols also constitute a substrate for their synthesis. Its function is as follows. Catalyzes the reduction of saturated and unsaturated C16 or C18 fatty acyl-CoA to fatty alcohols. It plays an essential role in the production of ether lipids/plasmalogens which synthesis requires fatty alcohols. In parallel, it is also required for wax monoesters production since fatty alcohols also constitute a substrate for their synthesis. The polypeptide is Fatty acyl-CoA reductase 1 (Rattus norvegicus (Rat)).